The sequence spans 453 residues: Glutamyl-tRNA reductase (453 aa).

Residues 52–55 (TCNR), serine 105, 110–112 (EDQ), and glutamine 116 contribute to the substrate site. Cysteine 53 acts as the Nucleophile in catalysis. 184-189 (GAGEMA) provides a ligand contact to NADP(+). The segment covering 413 to 424 (PGLEPEPTELPT) has biased composition (low complexity). The segment at 413–453 (PGLEPEPTELPTVPDGPEGVPEELRERMSSGMLEQFSTNDD) is disordered.

It belongs to the glutamyl-tRNA reductase family. As to quaternary structure, homodimer.

The enzyme catalyses (S)-4-amino-5-oxopentanoate + tRNA(Glu) + NADP(+) = L-glutamyl-tRNA(Glu) + NADPH + H(+). Its pathway is porphyrin-containing compound metabolism; protoporphyrin-IX biosynthesis; 5-aminolevulinate from L-glutamyl-tRNA(Glu): step 1/2. In terms of biological role, catalyzes the NADPH-dependent reduction of glutamyl-tRNA(Glu) to glutamate 1-semialdehyde (GSA). This is Glutamyl-tRNA reductase from Natronomonas pharaonis (strain ATCC 35678 / DSM 2160 / CIP 103997 / JCM 8858 / NBRC 14720 / NCIMB 2260 / Gabara) (Halobacterium pharaonis).